The sequence spans 174 residues: Nucleoside-triphosphatase THEP1 (174 aa).

ATP is bound by residues G8–S15 and L99–G106.

The protein belongs to the THEP1 NTPase family.

The enzyme catalyses a ribonucleoside 5'-triphosphate + H2O = a ribonucleoside 5'-diphosphate + phosphate + H(+). Its function is as follows. Has nucleotide phosphatase activity towards ATP, GTP, CTP, TTP and UTP. May hydrolyze nucleoside diphosphates with lower efficiency. The protein is Nucleoside-triphosphatase THEP1 of Methanosarcina barkeri (strain Fusaro / DSM 804).